The sequence spans 175 residues: RNA pyrophosphohydrolase (175 aa).

The Nudix hydrolase domain maps to 6-149; the sequence is GYRPNVGIVI…KRDVYRRVMK (144 aa). Residues 38-59 carry the Nudix box motif; the sequence is GGINPGETPEQAMYRELFEEVG.

This sequence belongs to the Nudix hydrolase family. RppH subfamily. A divalent metal cation serves as cofactor.

Accelerates the degradation of transcripts by removing pyrophosphate from the 5'-end of triphosphorylated RNA, leading to a more labile monophosphorylated state that can stimulate subsequent ribonuclease cleavage. This Yersinia enterocolitica serotype O:8 / biotype 1B (strain NCTC 13174 / 8081) protein is RNA pyrophosphohydrolase.